Reading from the N-terminus, the 976-residue chain is Terminal uridylyltransferase 1 (976 aa).

2 disordered regions span residues 1–47 and 129–185; these read MVSK…DADF and TGRS…TTEG. The required for oligomerization and may contribute to the incorporation into the MPsome complex stretch occupies residues 1 to 188; sequence MVSKYHRLLQ…EDDTTEGPRG (188 aa). Acidic residues predominate over residues 147–183; it reads ADDESDGNLDTDGSDASEGDEVESTTDADVYGEDDTT. The C2H2-type; atypical zinc-finger motif lies at 190-221; that stretch reads VRLYSCDACPHAVFTTHAALLAHAEEHHADLL. Positions 195, 198, 212, and 217 each coordinate Zn(2+). UTP is bound by residues Ser-298 and 309–312; that span reads ADID. Residues Asp-310 and Asp-312 each coordinate Mg(2+). Arg-358 lines the RNA pocket. One can recognise a PAP-associated domain in the interval 366–425; the sequence is ASSPILTVARRDAEDVVARSIRFILNGPATREDRLLLEGSVRDAVGPTGVQQVWWNRTSD. UTP is bound by residues 480 to 484, Lys-505, Lys-509, and 523 to 524; these read GIRNS and SY. The Nucleotide recognition motif (NRM) signature appears at 652–661; it reads IEDPYEENLN. An important for catalytic activity and RNA binding region spans residues 700 to 976; sequence DSSGTPAAGG…SKVTPFKSPR (277 aa). Positions 732–755 are disordered; it reads SESRRLPQSNSDNSGRIANGDNES.

It belongs to the DNA polymerase type-B-like family. Oligomer. Component of the mitochondrial 3' processome (MPsome) complex composed at least of terminal uridylyltransferase KRET1/TUT1, 3'-5' exonuclease DSS1, MPSS1, MPSS2 and MPSS3. Within the complex, interacts with DSS1, MPSS1 and MPSS3. It depends on Mg(2+) as a cofactor. Requires Mn(2+) as cofactor.

Its subcellular location is the mitochondrion. The enzyme catalyses RNA(n) + UTP = RNA(n)-3'-uridine ribonucleotide + diphosphate. Terminal uridylyltransferase which is involved in the post-transcriptional editing of mitochondrial RNA, a process involving the addition and deletion of uridine (U) nucleotides in the pre-RNA. Specifically, catalyzes the addition of Us to the 3'-hydroxyl group of guided RNA (gRNA), ribosomal RNA (rRNA) and some mRNAs. As part of the mitochondrial 3' processome (MPsome), catalyzes the primary 3' uridylation of gRNA precursors to facilitate their recognition and to induce their processive 3'-5' degradation by DSS1, and the secondary 3' uridylation of mature gRNAs. Involved in the 3' uridylylation of the long A/U tail of some edited and never-edited mRNAs. Promotes 3' uridylylation-mediated decay of some never-edited mRNAs. Does not mediate RNA-independent UTP polymerization. The polypeptide is Terminal uridylyltransferase 1 (Trypanosoma brucei brucei).